A 139-amino-acid chain; its full sequence is Protein PsiE homolog (139 aa).

The next 4 membrane-spanning stretches (helical) occupy residues 20-40 (IVLCTALIALAIVLIIALVKI), 60-80 (AEQAVMFFLYFGFIGLIVQYF), 85-105 (HFPLRYFIYAGITAMLRLIIV), and 111-131 (VDTILFAGAILIMVIALCLVL).

It belongs to the PsiE family.

Its subcellular location is the cell inner membrane. In Haemophilus influenzae (strain 86-028NP), this protein is Protein PsiE homolog.